Consider the following 144-residue polypeptide: Transcriptional regulator MraZ (144 aa).

2 SpoVT-AbrB domains span residues 6–48 (TYTP…PTDV) and 77–120 (ADEG…DPVR).

Belongs to the MraZ family. Forms oligomers.

The protein resides in the cytoplasm. It is found in the nucleoid. The protein is Transcriptional regulator MraZ of Nocardioides sp. (strain ATCC BAA-499 / JS614).